The following is a 471-amino-acid chain: Trigger factor (471 aa).

A PPIase FKBP-type domain is found at 169-264 (GDVAVVDFKG…LKEIKEKELP (96 aa)).

This sequence belongs to the FKBP-type PPIase family. Tig subfamily.

It localises to the cytoplasm. The catalysed reaction is [protein]-peptidylproline (omega=180) = [protein]-peptidylproline (omega=0). Its function is as follows. Involved in protein export. Acts as a chaperone by maintaining the newly synthesized protein in an open conformation. Functions as a peptidyl-prolyl cis-trans isomerase. This chain is Trigger factor, found in Nostoc sp. (strain PCC 7120 / SAG 25.82 / UTEX 2576).